Consider the following 74-residue polypeptide: Protein sok (74 aa).

Residues 26 to 45 (TQHGNKPPSRHEAESLKRRA) form a disordered region.

This chain is Protein sok (sok), found in Escherichia coli.